Reading from the N-terminus, the 235-residue chain is 1-Cys peroxiredoxin (235 aa).

The 175-residue stretch at 5–179 (ILLGDKFPDF…ILRVVDSLQL (175 aa)) folds into the Thioredoxin domain. Cys-49 is a catalytic residue. Residue Cys-49 is the Cysteine sulfenic acid (-SOH) intermediate of the active site.

This sequence belongs to the peroxiredoxin family. Prx6 subfamily.

The protein localises to the cytoplasm. It carries out the reaction a hydroperoxide + [protein]-dithiol = [protein]-disulfide + an alcohol + H2O. Functionally, thiol-specific peroxidase that catalyzes the reduction of hydrogen peroxide and organic hydroperoxides to water and alcohols, respectively. Plays a role in cell protection against oxidative stress by detoxifying peroxides. The polypeptide is 1-Cys peroxiredoxin (Dirofilaria immitis (Canine heartworm)).